We begin with the raw amino-acid sequence, 179 residues long: Translation initiation factor IF-3 (179 aa).

The protein belongs to the IF-3 family. In terms of assembly, monomer.

It is found in the cytoplasm. Functionally, IF-3 binds to the 30S ribosomal subunit and shifts the equilibrium between 70S ribosomes and their 50S and 30S subunits in favor of the free subunits, thus enhancing the availability of 30S subunits on which protein synthesis initiation begins. The chain is Translation initiation factor IF-3 from Buchnera aphidicola subsp. Acyrthosiphon pisum (strain 5A).